A 465-amino-acid polypeptide reads, in one-letter code: Chromosomal replication initiator protein DnaA (465 aa).

The domain I, interacts with DnaA modulators stretch occupies residues 1–87 (MLWTDCLTRL…RPGSILSSSE (87 aa)). The segment at 81 to 123 (SILSSSEQPATTTAALQTAPIPQPAKVKREPEPVANTAVSSKS) is disordered. Over residues 88 to 100 (QPATTTAALQTAP) the composition is skewed to low complexity. Residues 88–127 (QPATTTAALQTAPIPQPAKVKREPEPVANTAVSSKSSKKK) are domain II. The domain III, AAA+ region stretch occupies residues 128-345 (LLNPQFTFSL…GALNKVVAIS (218 aa)). ATP contacts are provided by G173, G175, K176, and T177. The tract at residues 346-465 (RFKGAPIDLD…YKNLLRLLQS (120 aa)) is domain IV, binds dsDNA.

It belongs to the DnaA family. Oligomerizes as a right-handed, spiral filament on DNA at oriC.

The protein localises to the cytoplasm. In terms of biological role, plays an essential role in the initiation and regulation of chromosomal replication. ATP-DnaA binds to the origin of replication (oriC) to initiate formation of the DNA replication initiation complex once per cell cycle. Binds the DnaA box (a 9 base pair repeat at the origin) and separates the double-stranded (ds)DNA. Forms a right-handed helical filament on oriC DNA; dsDNA binds to the exterior of the filament while single-stranded (ss)DNA is stabiized in the filament's interior. The ATP-DnaA-oriC complex binds and stabilizes one strand of the AT-rich DNA unwinding element (DUE), permitting loading of DNA polymerase. After initiation quickly degrades to an ADP-DnaA complex that is not apt for DNA replication. Binds acidic phospholipids. This chain is Chromosomal replication initiator protein DnaA, found in Acinetobacter baumannii (strain AB307-0294).